A 242-amino-acid chain; its full sequence is MSEEERPAALADTILRFLCHDDIDTVKELCADWFPIEYPDSWYRDITSNKKFFSLAATYNGQIVGMIVAEIKGRTKVHKEDGDILASSFSGDTQVAYILSLGVVKEFRKQGIGSLLLESLKSHISSTAQDHCKALYLHVLTTNSNAIRFYENRHFHQHHYLPYYYSIRGVLQDAYTYVLYLNGGHPPWTVMDYLQHLGSALAGFSPCTLPQRIYRQAHTLLRSLLPWSSISAKSGIEYSRTM.

Residues 1-192 lie on the Cytoplasmic side of the membrane; sequence MSEEERPAAL…GGHPPWTVMD (192 aa). In terms of domain architecture, N-acetyltransferase spans 13-182; that stretch reads TILRFLCHDD…DAYTYVLYLN (170 aa). A substrate-binding site is contributed by Tyr-38. Tyr-97 is a catalytic residue. Leu-99 serves as a coordination point for substrate. Acetyl-CoA contacts are provided by residues 101 to 103 and 109 to 114; these read LGV and KQGIGS. His-138 is a catalytic residue. Acetyl-CoA is bound by residues Asn-143 and 150–153; that span reads YENR. The required for homodimerization stretch occupies residues 162 to 173; it reads PYYYSIRGVLQD. A substrate-binding site is contributed by Tyr-165. An intramembrane region (helical) is located at residues 193-236; that stretch reads YLQHLGSALAGFSPCTLPQRIYRQAHTLLRSLLPWSSISAKSGI. The Cytoplasmic portion of the chain corresponds to 237–242; the sequence is EYSRTM.

Belongs to the acetyltransferase family. NAA60 subfamily. Monomer and homodimer; monomer in presence of substrate and homodimer in its absence.

The protein localises to the golgi apparatus membrane. The enzyme catalyses N-terminal L-methionyl-[transmembrane protein] + acetyl-CoA = N-terminal N(alpha)-acetyl-L-methionyl-[transmembrane protein] + CoA + H(+). The catalysed reaction is L-lysyl-[protein] + acetyl-CoA = N(6)-acetyl-L-lysyl-[protein] + CoA + H(+). Its function is as follows. N-alpha-acetyltransferase that specifically mediates the acetylation of N-terminal residues of the transmembrane proteins, with a strong preference for N-termini facing the cytosol. Displays N-terminal acetyltransferase activity towards a range of N-terminal sequences including those starting with Met-Lys, Met-Val, Met-Ala and Met-Met. Required for normal chromosomal segregation during anaphase. May also show histone acetyltransferase activity; such results are however unclear in vivo and would require additional experimental evidences. The polypeptide is N-alpha-acetyltransferase 60 (naa60) (Xenopus tropicalis (Western clawed frog)).